Here is a 719-residue protein sequence, read N- to C-terminus: Photosystem I P700 chlorophyll a apoprotein A1 (719 aa).

The next 8 helical transmembrane spans lie at 60-83, 146-169, 185-209, 281-299, 336-359, 375-401, 423-445, and 521-539; these read IFSA…FHGA, LYCT…FHYH, LNHH…HVSL, TAHH…GHMY, WHAQ…HHMY, LSLF…IFMV, AIIS…LYIH, and FLVH…LILL. The [4Fe-4S] cluster site is built by cysteine 563 and cysteine 572. 2 helical membrane passes run 579–600 and 654–676; these read HVFL…HFSW and LSAY…MFLF. Chlorophyll a' is bound at residue histidine 665. Chlorophyll a-binding residues include methionine 673 and tyrosine 681. Residue tryptophan 682 participates in phylloquinone binding. A helical transmembrane segment spans residues 714–719; sequence AVGVAH.

Belongs to the PsaA/PsaB family. The PsaA/B heterodimer binds the P700 chlorophyll special pair and subsequent electron acceptors. PSI consists of a core antenna complex that captures photons, and an electron transfer chain that converts photonic excitation into a charge separation. The eukaryotic PSI reaction center is composed of at least 11 subunits. P700 is a chlorophyll a/chlorophyll a' dimer, A0 is one or more chlorophyll a, A1 is one or both phylloquinones and FX is a shared 4Fe-4S iron-sulfur center. serves as cofactor.

The protein localises to the plastid. It localises to the chloroplast thylakoid membrane. The catalysed reaction is reduced [plastocyanin] + hnu + oxidized [2Fe-2S]-[ferredoxin] = oxidized [plastocyanin] + reduced [2Fe-2S]-[ferredoxin]. Its function is as follows. PsaA and PsaB bind P700, the primary electron donor of photosystem I (PSI), as well as the electron acceptors A0, A1 and FX. PSI is a plastocyanin-ferredoxin oxidoreductase, converting photonic excitation into a charge separation, which transfers an electron from the donor P700 chlorophyll pair to the spectroscopically characterized acceptors A0, A1, FX, FA and FB in turn. Oxidized P700 is reduced on the lumenal side of the thylakoid membrane by plastocyanin. This is Photosystem I P700 chlorophyll a apoprotein A1 from Equisetum palustre (Marsh horsetail).